A 473-amino-acid chain; its full sequence is Photosystem II CP43 reaction center protein (473 aa).

The propeptide occupies 1–14 (MKILYSLRRFYHVE). Residue T15 is modified to N-acetylthreonine. T15 is modified (phosphothreonine). 5 helical membrane passes run 69–93 (LFEV…PHLA), 134–155 (LLGP…KDRN), 178–200 (KALY…RKIT), 255–275 (KPFA…LSYS), and 291–312 (WFNN…ASQA). E367 is a [CaMn4O5] cluster binding site. Residues 447–471 (RARAAAAGFEKGIDRDLEPVLYMNP) form a helical membrane-spanning segment.

The protein belongs to the PsbB/PsbC family. PsbC subfamily. In terms of assembly, PSII is composed of 1 copy each of membrane proteins PsbA, PsbB, PsbC, PsbD, PsbE, PsbF, PsbH, PsbI, PsbJ, PsbK, PsbL, PsbM, PsbT, PsbX, PsbY, PsbZ, Psb30/Ycf12, at least 3 peripheral proteins of the oxygen-evolving complex and a large number of cofactors. It forms dimeric complexes. Binds multiple chlorophylls and provides some of the ligands for the Ca-4Mn-5O cluster of the oxygen-evolving complex. It may also provide a ligand for a Cl- that is required for oxygen evolution. PSII binds additional chlorophylls, carotenoids and specific lipids. serves as cofactor.

It is found in the plastid. Its subcellular location is the chloroplast thylakoid membrane. Functionally, one of the components of the core complex of photosystem II (PSII). It binds chlorophyll and helps catalyze the primary light-induced photochemical processes of PSII. PSII is a light-driven water:plastoquinone oxidoreductase, using light energy to abstract electrons from H(2)O, generating O(2) and a proton gradient subsequently used for ATP formation. This is Photosystem II CP43 reaction center protein from Hordeum vulgare (Barley).